Reading from the N-terminus, the 456-residue chain is Chromosomal replication initiator protein DnaA 1 (456 aa).

A domain I, interacts with DnaA modulators region spans residues 1-68 (MRAWEEFLLL…KASLINNNGK (68 aa)). Positions 68–101 (KPIRVRVTSLDKSTPFKETQIQQEKTAYFTMKYG) are domain II. A domain III, AAA+ region region spans residues 102 to 320 (DIDPNMSFAN…HALTTLAKRV (219 aa)). Ser-150, Gly-152, Lys-153, and Thr-154 together coordinate ATP. The domain IV, binds dsDNA stretch occupies residues 321–456 (AYKKLSHQML…AYQSLDFIED (136 aa)).

Belongs to the DnaA family. Oligomerizes as a right-handed, spiral filament on DNA at oriC.

It is found in the cytoplasm. Plays an essential role in the initiation and regulation of chromosomal replication. ATP-DnaA binds to the origin of replication (oriC) to initiate formation of the DNA replication initiation complex once per cell cycle. Binds the DnaA box (a 9 base pair repeat at the origin) and separates the double-stranded (ds)DNA. Forms a right-handed helical filament on oriC DNA; dsDNA binds to the exterior of the filament while single-stranded (ss)DNA is stabiized in the filament's interior. The ATP-DnaA-oriC complex binds and stabilizes one strand of the AT-rich DNA unwinding element (DUE), permitting loading of DNA polymerase. After initiation quickly degrades to an ADP-DnaA complex that is not apt for DNA replication. Binds acidic phospholipids. This Chlamydia trachomatis serovar D (strain ATCC VR-885 / DSM 19411 / UW-3/Cx) protein is Chromosomal replication initiator protein DnaA 1.